The sequence spans 285 residues: Tropomyosin (285 aa).

The stretch at 1–273 forms a coiled coil; the sequence is MDAIKKKMQA…KEKYREIGDD (273 aa).

It belongs to the tropomyosin family. Homodimer.

Tropomyosin, in association with the troponin complex, plays a central role in the calcium dependent regulation of muscle contraction. This Chironomus kiiensis (Midge) protein is Tropomyosin.